A 630-amino-acid polypeptide reads, in one-letter code: Zinc finger protein 37 homolog (630 aa).

3 disordered regions span residues 1–45, 77–172, and 193–285; these read MSVS…SAAE, KPDM…PSKK, and HSRN…KHEK. Basic and acidic residues predominate over residues 14–30; it reads ETVDRRRSAETTKEAGR. The KRAB domain occupies 32–103; the sequence is LEMAVSEPEA…KGKRPSQGCP (72 aa). Residue Ser42 is modified to Phosphoserine. The segment covering 110–122 has biased composition (basic and acidic residues); it reads KQKETDGKVQKDD. A compositionally biased stretch (basic residues) spans 161 to 172; it reads NNLHKKHVPSKK. Positions 193-206 are enriched in basic and acidic residues; that stretch reads HSRNCVKRKSDAAK. Positions 221 to 231 are enriched in basic residues; that stretch reads KGKKQTGKKHE. Composition is skewed to basic and acidic residues over residues 232–243 and 260–274; these read KLSSHSSSDKCN and IKQD…HEKS. 2 C2H2-type zinc fingers span residues 293–315 and 321–343; these read YECN…QRVH and YECN…QRTH. The segment at 349–367 adopts a C2H2-type 3; atypical zinc-finger fold; that stretch reads YECIQCGKAHGHKHALTDH. 9 C2H2-type zinc fingers span residues 377 to 399, 405 to 427, 433 to 455, 461 to 483, 489 to 511, 517 to 539, 545 to 567, 573 to 595, and 601 to 623; these read YECA…VRSH, YECK…VRTH, YECN…MRIH, FECN…QRTH, YKCN…MRTH, FECN…QRVH, YECN…QRTH, YECN…QRSH, and YECN…VKTH.

It belongs to the krueppel C2H2-type zinc-finger protein family. In terms of tissue distribution, expressed at low level in several tissues including fetal cartilage.

Its subcellular location is the nucleus. Its function is as follows. May be involved in transcriptional regulation. The chain is Zinc finger protein 37 homolog (ZFP37) from Homo sapiens (Human).